Here is a 289-residue protein sequence, read N- to C-terminus: E3 ubiquitin-protein ligase MARCHF1 (289 aa).

The segment at 1–66 (MLGWCEAIAR…SPTTGTAPRS (66 aa)) is responsible for low stability. The segment at 13–69 (HRIPNNTRTPEISGDLADASQTSTLNEKSPGRSASRSSNISKASSPTTGTAPRSQSR) is disordered. Residues 43 to 58 (GRSASRSSNISKASSP) are compositionally biased toward low complexity. Over residues 59-69 (TTGTAPRSQSR) the composition is skewed to polar residues. The segment at 72–133 (VCPSTQDICR…ELCKYDFIME (62 aa)) adopts an RING-CH-type zinc-finger fold. Zn(2+) is bound by residues C80, C83, C97, C99, H107, C110, C123, and C126. The next 2 membrane-spanning stretches (helical) occupy residues 155-175 (IFCS…SLYV) and 197-217 (FWTK…FMYV). Residues 222 to 279 (YVQLWRRLKAYNRVIFVQNCPDTAKKLEKNFSCNVNTDIKDAVVVPVPQTGANSLPSA) form a responsible for down-regulation of CD86 and MHC class II cell surface expression region.

In terms of assembly, interacts with CD83; this interaction antagonizes MARCHF1-mediated MHC II and CD86 down-regulation. Ubiquitinated via ubiquitin-conjugating enzyme E2 D1/UBE2D1 independently of lysines, leading to proteolytic degradation. Post-translationally, has a short half-life. Instability/short half-life permits rapid changes that allow efficient induction of antigen presentation once antigen presenting cells, APCs, receive maturation signals. Small changes in protein levels significantly alter the cell surface display of MHC class II proteins. As to expression, expressed in antigen presenting cells, APCs, located in lymph nodes and spleen. Also expressed in lung. Expression is high in follicular B-cells, moderate in dendritic cells and low in splenic T-cells.

Its subcellular location is the golgi apparatus. It localises to the trans-Golgi network membrane. The protein resides in the lysosome membrane. It is found in the cytoplasmic vesicle membrane. The protein localises to the late endosome membrane. Its subcellular location is the early endosome membrane. It localises to the cell membrane. The catalysed reaction is S-ubiquitinyl-[E2 ubiquitin-conjugating enzyme]-L-cysteine + [acceptor protein]-L-lysine = [E2 ubiquitin-conjugating enzyme]-L-cysteine + N(6)-ubiquitinyl-[acceptor protein]-L-lysine.. It participates in protein modification; protein ubiquitination. E3 ubiquitin-protein ligase that mediates ubiquitination of TFRC, CD86, FAS and MHC class II proteins, such as HLA-DR alpha and beta, and promotes their subsequent endocytosis and sorting to lysosomes via multivesicular bodies. By constitutively ubiquitinating MHC class II proteins in immature dendritic cells, down-regulates their cell surface localization thus sequestering them in the intracellular endosomal system. Also regulates insulin sensitivity by controlling surface expression of the insulin receptor subunit beta/INSR by direct ubiquitination and degradation. In terms of biological role, (Microbial infection) Plays a role in iron metabolism by regulating the levels of the transferrin receptor TFRC during human cytomegalovirus infection, subsequently contributing to a proviral effect. The chain is E3 ubiquitin-protein ligase MARCHF1 from Homo sapiens (Human).